A 445-amino-acid polypeptide reads, in one-letter code: 23S rRNA (uracil(1939)-C(5))-methyltransferase RlmD (445 aa).

Residues 12 to 70 enclose the TRAM domain; that stretch reads SKQLSSKLSLKVTQLDHLGAGIAHHDGKIVFINGALPGETVSVQLTEQKKKFARAKLLK. The [4Fe-4S] cluster site is built by cysteine 83, cysteine 89, cysteine 92, and cysteine 171. S-adenosyl-L-methionine-binding residues include glutamine 278, phenylalanine 307, asparagine 312, glutamate 328, aspartate 355, and aspartate 375. Catalysis depends on cysteine 401, which acts as the Nucleophile.

Belongs to the class I-like SAM-binding methyltransferase superfamily. RNA M5U methyltransferase family. RlmD subfamily.

The catalysed reaction is uridine(1939) in 23S rRNA + S-adenosyl-L-methionine = 5-methyluridine(1939) in 23S rRNA + S-adenosyl-L-homocysteine + H(+). Functionally, catalyzes the formation of 5-methyl-uridine at position 1939 (m5U1939) in 23S rRNA. The chain is 23S rRNA (uracil(1939)-C(5))-methyltransferase RlmD from Shewanella halifaxensis (strain HAW-EB4).